Reading from the N-terminus, the 400-residue chain is MQCDRLWHNARLATLAESRPGLGLVEDGVIAARDGRILHAGPTAEAPSFAARETIDCEGRWITPGLIDCHTHLVFGGDRAQEFEARLAGASYEEIARAGGGIVSTVRATRAASEDDLVAGALRRLDALIAEGVTTVEVKSGYGLSLAAERASLRAARRLGAERDVTVTTTFLGAHALPPEESDRDRFIDRICAEMLPAIAQEGLADAVDAFCEGIAFSPVETARVFEAARDAGLPVKLHADQLSNLGGAALAARFGALSADHLEYTDEAGAAAMAQAGTVAVLLPGAFYFIRETKVPPVDLFRRHGTRIALATDCNPGTSPLTSLLLVLNMGATLFRLTVEECLAGVTREAARALGRLHDLGTLEAGKWCDLAIWDIERPAELVYRMGFNPLHARIRRGR.

Fe(3+)-binding residues include H70 and H72. Zn(2+) contacts are provided by H70 and H72. Residues R79, Y142, and H175 each coordinate 4-imidazolone-5-propanoate. Y142 serves as a coordination point for N-formimidoyl-L-glutamate. H239 contributes to the Fe(3+) binding site. H239 contacts Zn(2+). Q242 is a 4-imidazolone-5-propanoate binding site. Residue D314 participates in Fe(3+) binding. D314 is a Zn(2+) binding site. N-formimidoyl-L-glutamate-binding residues include N316 and G318. T319 is a 4-imidazolone-5-propanoate binding site.

It belongs to the metallo-dependent hydrolases superfamily. HutI family. The cofactor is Zn(2+). Requires Fe(3+) as cofactor.

It localises to the cytoplasm. The catalysed reaction is 4-imidazolone-5-propanoate + H2O = N-formimidoyl-L-glutamate. It participates in amino-acid degradation; L-histidine degradation into L-glutamate; N-formimidoyl-L-glutamate from L-histidine: step 3/3. Catalyzes the hydrolytic cleavage of the carbon-nitrogen bond in imidazolone-5-propanoate to yield N-formimidoyl-L-glutamate. It is the third step in the universal histidine degradation pathway. The polypeptide is Imidazolonepropionase (Methylobacterium nodulans (strain LMG 21967 / CNCM I-2342 / ORS 2060)).